We begin with the raw amino-acid sequence, 296 residues long: tRNA uridine(34) hydroxylase (296 aa).

Positions 130-225 (RGEDVVFFDG…YGEAYGDRGL (96 aa)) constitute a Rhodanese domain. The active-site Cysteine persulfide intermediate is cysteine 185.

Belongs to the TrhO family.

It carries out the reaction uridine(34) in tRNA + AH2 + O2 = 5-hydroxyuridine(34) in tRNA + A + H2O. Its function is as follows. Catalyzes oxygen-dependent 5-hydroxyuridine (ho5U) modification at position 34 in tRNAs. The chain is tRNA uridine(34) hydroxylase from Kocuria rhizophila (strain ATCC 9341 / DSM 348 / NBRC 103217 / DC2201).